A 160-amino-acid chain; its full sequence is Heme transporter hrg-5 (160 aa).

The helical transmembrane segment at 21 to 41 (IALTILDILIGFSNILSYAIQ) threads the bilayer. Asn44 is a glycosylation site (N-linked (GlcNAc...) asparagine). The next 3 membrane-spanning stretches (helical) occupy residues 47 to 67 (ALTLTAMVTLVACHTLQMFLA), 89 to 109 (ITLGFLALGCFVVCFIIAGVT), and 123 to 142 (FTGLWATAITKYTWQNALLA). Asn144 carries an N-linked (GlcNAc...) asparagine glycan.

It belongs to the HRG family.

Its subcellular location is the membrane. Its function is as follows. Heme transporter. This is Heme transporter hrg-5 (hrg-5) from Caenorhabditis elegans.